A 150-amino-acid polypeptide reads, in one-letter code: uncharacterized protein (150 aa).

The first 39 residues, 1 to 39 (MKQRFSQVATVIFFVMSIRSPRNLGFFFTLALFVVLVCS), serve as a signal peptide directing secretion.

This is an uncharacterized protein from Saccharomyces cerevisiae (strain ATCC 204508 / S288c) (Baker's yeast).